The following is a 109-amino-acid chain: Large ribosomal subunit protein uL22 (109 aa).

The protein belongs to the universal ribosomal protein uL22 family. In terms of assembly, part of the 50S ribosomal subunit.

In terms of biological role, this protein binds specifically to 23S rRNA; its binding is stimulated by other ribosomal proteins, e.g. L4, L17, and L20. It is important during the early stages of 50S assembly. It makes multiple contacts with different domains of the 23S rRNA in the assembled 50S subunit and ribosome. Functionally, the globular domain of the protein is located near the polypeptide exit tunnel on the outside of the subunit, while an extended beta-hairpin is found that lines the wall of the exit tunnel in the center of the 70S ribosome. This Polaromonas sp. (strain JS666 / ATCC BAA-500) protein is Large ribosomal subunit protein uL22.